Reading from the N-terminus, the 772-residue chain is Lon protease (772 aa).

Residues 6 to 200 (YPTLPLKNTV…LMHRYLNHEV (195 aa)) enclose the Lon N-terminal domain. 352-359 (GPPGVGKT) serves as a coordination point for ATP. The region spanning 588–769 (QLAPGVAAGL…EEVLAEAIPD (182 aa)) is the Lon proteolytic domain. Catalysis depends on residues S675 and K718.

It belongs to the peptidase S16 family. As to quaternary structure, homohexamer. Organized in a ring with a central cavity.

It is found in the cytoplasm. It catalyses the reaction Hydrolysis of proteins in presence of ATP.. In terms of biological role, ATP-dependent serine protease that mediates the selective degradation of mutant and abnormal proteins as well as certain short-lived regulatory proteins. Required for cellular homeostasis and for survival from DNA damage and developmental changes induced by stress. Degrades polypeptides processively to yield small peptide fragments that are 5 to 10 amino acids long. Binds to DNA in a double-stranded, site-specific manner. In Nitrosococcus oceani (strain ATCC 19707 / BCRC 17464 / JCM 30415 / NCIMB 11848 / C-107), this protein is Lon protease.